Consider the following 152-residue polypeptide: Ribosome maturation factor RimP (152 aa).

It belongs to the RimP family.

It localises to the cytoplasm. Functionally, required for maturation of 30S ribosomal subunits. The sequence is that of Ribosome maturation factor RimP from Alteromonas mediterranea (strain DSM 17117 / CIP 110805 / LMG 28347 / Deep ecotype).